A 509-amino-acid chain; its full sequence is MTYEKPDLKRTKATVSFKRIYLHRASEFPGPWLCQCSSIMAQYHAWRGDLPRYLHVLHEKYGDFVRYAPNHVSIRHCDVWEDVYGFQRNVSKYDTTYSPFRLAPDFTSTWNTSNVDVHKSRRKLLNKLFSEQHLDDYGTLITVQVDEFMRQILEALPKDKDVMAGPINFAYKSDVVAREIITSLVSGQTYGFQSGDAKSASLLADISKFERKLYLLGFAPWLKMLPSFKPTLALAQWIVQSSKQGLASGSKNTLVAKMLAARDEEKDVEFSRNDVIADARFFLLGGSVTSSSALSATLFFLLHHPVEMQELYDELRGIFPTYEDIKADAQLMRCKRLRAVFEESMRLAPPVPTLLPRLVGPGGIKACGRYVPEGVVIGAPCWAISRDKRYFDKPNVFKPDRWLADSSDPVALEKMLLATRASQPFSYGPRACPGRALAFRENGLLLAKLVYAFEMEPVQDKSIVEESLTGICDGLVFNQLDTVGAHEVELMVRYRLRLDGKTKRRVSGN.

Residue Cys432 coordinates heme.

The protein belongs to the cytochrome P450 family. The cofactor is heme.

It participates in mycotoxin biosynthesis. In terms of biological role, cytochrome P450 monooxygenase; part of the gene clusters that mediate the biosynthesis of the host-selective toxins (HSTs) AF-toxins responsible for Alternaria black spot of strawberry disease by the strawberry pathotype. AF-toxin I and III are valine derivatives of 2,3-dyhydroxy-isovaleric acid and 2-hydroxy-isovaleric acid respectively, while AF II is an isoleucine derivative of 2-hydroxy-valeric acid. These derivatives are bound to a 9,10-epoxy-8-hydroxy-9-methyl-decatrienoic acid (EDA) moiety. On cellular level, AF-toxins affect plasma membrane of susceptible cells and cause a sudden increase in loss of K(+) after a few minutes of toxin treatment. The aldo-keto reductase AFTS1 catalyzes the conversion of 2-keto-isovaleric acid (2-KIV) to 2-hydroxy-isovaleric acid (2-HIV) by reduction of its ketone to an alcohol. The acyl-CoA ligase AFT1, the hydrolase AFT2 and the enoyl-CoA hydratases AFT3 and AFT6, but also the polyketide synthase AFT9, the acyl-CoA dehydrogenase AFT10, the cytochrome P450 monooxygenase AFT11 and the oxidoreductase AFT12 are all involved in the biosynthesis of the AK-, AF- and ACT-toxin common EDA structural moiety. The exact function of each enzyme, and of additional enzymes identified within the AF-toxin clusters have still to be determined. The protein is Cytochrome P450 monooxygenase AFT11-1 of Alternaria alternata (Alternaria rot fungus).